The following is a 319-amino-acid chain: Putative protein phosphatase 2C 23 (319 aa).

The 242-residue stretch at 73–314 (AVRMESASCY…DDITVVVACI (242 aa)) folds into the PPM-type phosphatase domain. Mn(2+) contacts are provided by glycine 102, aspartate 235, and aspartate 305.

This sequence belongs to the PP2C family. Mg(2+) is required as a cofactor.

It catalyses the reaction O-phospho-L-seryl-[protein] + H2O = L-seryl-[protein] + phosphate. The enzyme catalyses O-phospho-L-threonyl-[protein] + H2O = L-threonyl-[protein] + phosphate. The protein is Putative protein phosphatase 2C 23 of Oryza sativa subsp. japonica (Rice).